Reading from the N-terminus, the 176-residue chain is Inorganic pyrophosphatase (176 aa).

Residues lysine 30, arginine 44, and tyrosine 56 each coordinate substrate. The Mg(2+) site is built by aspartate 66, aspartate 71, and aspartate 103. Tyrosine 142 serves as a coordination point for substrate.

This sequence belongs to the PPase family. As to quaternary structure, homohexamer. The cofactor is Mg(2+).

The protein resides in the cytoplasm. It catalyses the reaction diphosphate + H2O = 2 phosphate + H(+). Catalyzes the hydrolysis of inorganic pyrophosphate (PPi) forming two phosphate ions. The polypeptide is Inorganic pyrophosphatase (Salmonella typhi).